The following is a 180-amino-acid chain: Large ribosomal subunit protein uL6 (180 aa).

Belongs to the universal ribosomal protein uL6 family. In terms of assembly, part of the 50S ribosomal subunit.

This protein binds to the 23S rRNA, and is important in its secondary structure. It is located near the subunit interface in the base of the L7/L12 stalk, and near the tRNA binding site of the peptidyltransferase center. This chain is Large ribosomal subunit protein uL6, found in Thermoanaerobacter sp. (strain X514).